Here is a 428-residue protein sequence, read N- to C-terminus: 3-phosphoshikimate 1-carboxyvinyltransferase (428 aa).

3-phosphoshikimate-binding residues include lysine 23, serine 24, and arginine 28. Lysine 23 provides a ligand contact to phosphoenolpyruvate. Glycine 97 and arginine 125 together coordinate phosphoenolpyruvate. Positions 170, 171, 172, 198, 314, 337, and 341 each coordinate 3-phosphoshikimate. Residue glutamine 172 participates in phosphoenolpyruvate binding. Aspartate 314 functions as the Proton acceptor in the catalytic mechanism. Positions 345, 387, and 412 each coordinate phosphoenolpyruvate.

It belongs to the EPSP synthase family. In terms of assembly, monomer.

The protein resides in the cytoplasm. The enzyme catalyses 3-phosphoshikimate + phosphoenolpyruvate = 5-O-(1-carboxyvinyl)-3-phosphoshikimate + phosphate. Its pathway is metabolic intermediate biosynthesis; chorismate biosynthesis; chorismate from D-erythrose 4-phosphate and phosphoenolpyruvate: step 6/7. Its function is as follows. Catalyzes the transfer of the enolpyruvyl moiety of phosphoenolpyruvate (PEP) to the 5-hydroxyl of shikimate-3-phosphate (S3P) to produce enolpyruvyl shikimate-3-phosphate and inorganic phosphate. The sequence is that of 3-phosphoshikimate 1-carboxyvinyltransferase from Buchnera aphidicola subsp. Schizaphis graminum (strain Sg).